The chain runs to 101 residues: Acylphosphatase-1 (101 aa).

Ser-2 is modified (N-acetylserine). Position 2 is an N-acetylalanine (Ser-2). Residues Ser-11–Lys-101 enclose the Acylphosphatase-like domain. Residues Arg-26 and Asn-44 contribute to the active site.

This sequence belongs to the acylphosphatase family. Organ-common type isozyme is found in many different tissues.

The enzyme catalyses an acyl phosphate + H2O = a carboxylate + phosphate + H(+). This Sus scrofa (Pig) protein is Acylphosphatase-1 (ACYP1).